Reading from the N-terminus, the 132-residue chain is ATP synthase epsilon chain, cyanelle (132 aa).

Belongs to the ATPase epsilon chain family. F-type ATPases have 2 components, CF(1) - the catalytic core - and CF(0) - the membrane proton channel. CF(1) has five subunits: alpha(3), beta(3), gamma(1), delta(1), epsilon(1). CF(0) has three main subunits: a, b and c.

The protein resides in the plastid. Its subcellular location is the cyanelle thylakoid membrane. Produces ATP from ADP in the presence of a proton gradient across the membrane. The protein is ATP synthase epsilon chain, cyanelle of Cyanophora paradoxa.